A 518-amino-acid polypeptide reads, in one-letter code: GMP synthase [glutamine-hydrolyzing] (518 aa).

The Glutamine amidotransferase type-1 domain maps to Lys11 to Asn203. Cys88 acts as the Nucleophile in catalysis. Residues His177 and Glu179 contribute to the active site. The GMPS ATP-PPase domain maps to Trp204–Arg393. Ser231–Ser237 provides a ligand contact to ATP.

Homodimer.

The catalysed reaction is XMP + L-glutamine + ATP + H2O = GMP + L-glutamate + AMP + diphosphate + 2 H(+). It participates in purine metabolism; GMP biosynthesis; GMP from XMP (L-Gln route): step 1/1. Its function is as follows. Catalyzes the synthesis of GMP from XMP. The protein is GMP synthase [glutamine-hydrolyzing] of Ligilactobacillus salivarius (strain UCC118) (Lactobacillus salivarius).